The following is a 150-amino-acid chain: Large ribosomal subunit protein bL9 (150 aa).

It belongs to the bacterial ribosomal protein bL9 family.

In terms of biological role, binds to the 23S rRNA. The protein is Large ribosomal subunit protein bL9 of Corynebacterium glutamicum (strain R).